Reading from the N-terminus, the 348-residue chain is MKVIVDNKIPYIREAIEQIADEVIYVPGKDFTPELVQDADALIIRTRTRCDRSLLAGSKVKFIATATIGFDHIDTAYCREAGITWTNAPGCNSASVAQYIQSALFILQQTRGMKLNQMTIGIVGVGNVGSKVADVARKLGIQVMLNDLPREEREESTMFASLKSIAEKCDIITFHVPLYKEGKYKTYHLADKHFFHSLKKGAVIMNTSRGEVIETEALLEALRSGILSDAVIDVWEHEPDIDLELLEKVIIGTPHIAGYSADGKANATRMSLEALCRFFRIETDYRITPPEPKNKLISTATYEEASLMIYDPRRDSDALKSHPGLFEQLRGDYPLRREEGAYRIVITK.

Substrate-binding residues include Thr46 and Thr67. NAD(+) is bound at residue Asp147. Residue Arg209 is part of the active site. Asp233 provides a ligand contact to NAD(+). Residue Glu238 is part of the active site. Catalysis depends on His255, which acts as the Proton donor. Position 258 (Gly258) interacts with NAD(+). A substrate-binding site is contributed by Tyr259.

This sequence belongs to the D-isomer specific 2-hydroxyacid dehydrogenase family. PdxB subfamily. As to quaternary structure, homodimer.

It localises to the cytoplasm. The enzyme catalyses 4-phospho-D-erythronate + NAD(+) = (R)-3-hydroxy-2-oxo-4-phosphooxybutanoate + NADH + H(+). It participates in cofactor biosynthesis; pyridoxine 5'-phosphate biosynthesis; pyridoxine 5'-phosphate from D-erythrose 4-phosphate: step 2/5. Functionally, catalyzes the oxidation of erythronate-4-phosphate to 3-hydroxy-2-oxo-4-phosphonooxybutanoate. This is Erythronate-4-phosphate dehydrogenase from Bacteroides fragilis (strain ATCC 25285 / DSM 2151 / CCUG 4856 / JCM 11019 / LMG 10263 / NCTC 9343 / Onslow / VPI 2553 / EN-2).